A 115-amino-acid chain; its full sequence is Biotrophy-associated secreted protein 1 (115 aa).

The signal sequence occupies residues 1–22 (MHVFNFAALFTVLATFTATAAA). Residues 24 to 115 (DQGSNTFDQR…GIRRVENYYP (92 aa)) form a disordered region. 2 stretches are compositionally biased toward basic and acidic residues: residues 46 to 55 (IREEKQENVG) and 91 to 115 (QQKE…NYYP).

It localises to the secreted. Its subcellular location is the host cytoplasm. In terms of biological role, secreted effector involved in biotrophic colonization of plant cells. Induces an early, basal defense response in susceptible rice, including rapid callose deposition and ROS production in leaves and calli. Also promotes sporulation and mycelia growth suggesting a role across the whole process of interaction, from the biotrophic phase to sporulation. The sequence is that of Biotrophy-associated secreted protein 1 from Pyricularia oryzae (strain 70-15 / ATCC MYA-4617 / FGSC 8958) (Rice blast fungus).